A 181-amino-acid polypeptide reads, in one-letter code: Mitochondrial pyruvate carrier-like protein (181 aa).

The next 2 membrane-spanning stretches (helical) occupy residues 23 to 42 and 52 to 74; these read YLAS…PLAA and IISG…FAYR. Residues 125–154 form a disordered region; that stretch reads TGSVDSSATSTGSVDSSATSTGSVDSSAAT.

The protein belongs to the mitochondrial pyruvate carrier (MPC) (TC 2.A.105) family.

The protein resides in the mitochondrion inner membrane. Functionally, may mediate the uptake of pyruvate into mitochondria. In Bos taurus (Bovine), this protein is Mitochondrial pyruvate carrier-like protein.